Reading from the N-terminus, the 384-residue chain is Farnesyl pyrophosphate synthase 1, mitochondrial (384 aa).

Residues Lys-89, Arg-92, and Gln-128 each contribute to the isopentenyl diphosphate site. Mg(2+)-binding residues include Asp-135 and Asp-139. Arg-144 lines the dimethylallyl diphosphate pocket. Residue Arg-145 coordinates isopentenyl diphosphate. Dimethylallyl diphosphate-binding residues include Lys-232, Thr-233, Gln-271, Lys-288, and Lys-297.

It belongs to the FPP/GGPP synthase family. Mg(2+) is required as a cofactor. In terms of tissue distribution, the FPS1L mRNA accumulates preferentially in inflorescences, whereas the FPS1S mRNA is predominantly expressed in roots and inflorescences.

The protein localises to the mitochondrion. Its subcellular location is the cytoplasm. The enzyme catalyses isopentenyl diphosphate + dimethylallyl diphosphate = (2E)-geranyl diphosphate + diphosphate. The catalysed reaction is isopentenyl diphosphate + (2E)-geranyl diphosphate = (2E,6E)-farnesyl diphosphate + diphosphate. It functions in the pathway isoprenoid biosynthesis; farnesyl diphosphate biosynthesis; farnesyl diphosphate from geranyl diphosphate and isopentenyl diphosphate: step 1/1. It participates in isoprenoid biosynthesis; geranyl diphosphate biosynthesis; geranyl diphosphate from dimethylallyl diphosphate and isopentenyl diphosphate: step 1/1. In terms of biological role, catalyzes the sequential condensation of isopentenyl pyrophosphate with the allylic pyrophosphates, dimethylallyl pyrophosphate, and then with the resultant geranylpyrophosphate to the ultimate product farnesyl pyrophosphate. The polypeptide is Farnesyl pyrophosphate synthase 1, mitochondrial (FPS1) (Arabidopsis thaliana (Mouse-ear cress)).